The primary structure comprises 405 residues: MRSWSTVMLAVLATAATVFGHDADPEMKMTTPQIIMRWGYPAMIYDVTTEDGYILELHRIPYGKTNVTWPNGKKPVVFMQHGLECSSSNWVVNLPTESAAFLFADAGYDVWLGNFRGNTYSMKHKNLKPSHSAFWDWSWDEMQQYDLPAMIEKALEVTGQDSLYYIGHSQGTLTMFSRLSEDKVGWGNKIKKFFALAPVGSVKHIKGALKFFADYFSLEFDGWFDVFGSGEFLPNNWIMKLVSESVCAGLKVEAGVCDDVMFLIAGPESNQLNATRVPIYVAHTPAGTSTQNIVHWIQMVRHGGTPKYDYGEKGNKKHYGQANVPAYDFTTVNRPVYLYWGDSDWLADPTDVTDFLLTHLNPSTVVQNNKLIDYNHLDFIWGLRAPKDIYEPIIDIVRNDVLNGS.

An N-terminal signal peptide occupies residues Met-1–Gly-20. N-linked (GlcNAc...) asparagine glycosylation occurs at Asn-66. Ser-169 serves as the catalytic Nucleophile. A glycan (N-linked (GlcNAc...) asparagine) is linked at Asn-273. Catalysis depends on charge relay system residues Asp-344 and His-376.

The protein belongs to the AB hydrolase superfamily. Lipase family.

It localises to the secreted. The protein resides in the lysosome lumen. Its function is as follows. Lipase that, together with lipl-3, plays a role in the response to nutrient deprivation by controlling lipid metabolism. Specifically, involved in the breakdown of lipids during lipophagy, a process during which lipids contained in lipid droplets that have been delivered to lysosomes by autophagy are degraded. This Caenorhabditis elegans protein is Lipase lipl-1.